Here is a 433-residue protein sequence, read N- to C-terminus: Serine/threonine-protein kinase toxin HipA (433 aa).

Residue S147 is modified to Phosphoserine; by autocatalysis. ATP is bound by residues 151–154, K178, and 220–222; these read VQPK and ERF. The active-site Proton acceptor is D306. Residues 308 to 311 and 327 to 328 contribute to the ATP site; these read HGKN and YD. 2 consecutive DNA-binding regions follow at residues 380-384 and R429; that span reads RIARR.

This sequence belongs to the HipA Ser/Thr kinase family. As to quaternary structure, monomer. Forms a HipA(2)HipB(2)-DNA complex with cognate antitoxin HipB; has higher affinity for the latter when HipB is prebound to DNA and HipA is phosphorylated. Binds DNA in the ternary complex.

It carries out the reaction L-seryl-[protein] + ATP = O-phospho-L-seryl-[protein] + ADP + H(+). The enzyme catalyses L-threonyl-[protein] + ATP = O-phospho-L-threonyl-[protein] + ADP + H(+). Toxic component of a type II toxin-antitoxin (TA) system; overexpression in wild-type temporarily inhibits cell growth, overexpression in a hipAB deletion leads to acute growth inhibition. The toxic effect of HipA is neutralized by its cognate antitoxin HipB. In the ternary phosphoserine-HipA-HipB-DNA complex the DNA is bent about 125 degrees; all HipA in the crystallized ternary complex is phosphorylated. In E.coli phosphorylation of HipA is thought to release HipB from the HipA-HipB-DNA complex, suggesting the complex functions differently in the 2 bacteria. Phosphorylates Glu-tRNA-ligase (GltX, on 'Ser-239') in vivo, with HipB probably acts as a corepressor for transcription of the hipBA promoter. The sequence is that of Serine/threonine-protein kinase toxin HipA from Shewanella oneidensis (strain ATCC 700550 / JCM 31522 / CIP 106686 / LMG 19005 / NCIMB 14063 / MR-1).